A 230-amino-acid polypeptide reads, in one-letter code: Small ribosomal subunit protein uS3 (230 aa).

A KH type-2 domain is found at Val39–Arg107.

This sequence belongs to the universal ribosomal protein uS3 family. Part of the 30S ribosomal subunit. Forms a tight complex with proteins S10 and S14.

Binds the lower part of the 30S subunit head. Binds mRNA in the 70S ribosome, positioning it for translation. The sequence is that of Small ribosomal subunit protein uS3 from Shewanella baltica (strain OS223).